Consider the following 448-residue polypeptide: Exodeoxyribonuclease 7 large subunit (448 aa).

Belongs to the XseA family. In terms of assembly, heterooligomer composed of large and small subunits.

The protein resides in the cytoplasm. It catalyses the reaction Exonucleolytic cleavage in either 5'- to 3'- or 3'- to 5'-direction to yield nucleoside 5'-phosphates.. Functionally, bidirectionally degrades single-stranded DNA into large acid-insoluble oligonucleotides, which are then degraded further into small acid-soluble oligonucleotides. This is Exodeoxyribonuclease 7 large subunit from Alcanivorax borkumensis (strain ATCC 700651 / DSM 11573 / NCIMB 13689 / SK2).